The sequence spans 554 residues: Glucose-6-phosphate isomerase (554 aa).

The active-site Proton donor is glutamate 359. Residues histidine 390 and lysine 518 contribute to the active site.

Belongs to the GPI family.

It is found in the cytoplasm. It carries out the reaction alpha-D-glucose 6-phosphate = beta-D-fructose 6-phosphate. The protein operates within carbohydrate biosynthesis; gluconeogenesis. It functions in the pathway carbohydrate degradation; glycolysis; D-glyceraldehyde 3-phosphate and glycerone phosphate from D-glucose: step 2/4. In terms of biological role, catalyzes the reversible isomerization of glucose-6-phosphate to fructose-6-phosphate. This chain is Glucose-6-phosphate isomerase, found in Pseudomonas fluorescens.